Reading from the N-terminus, the 424-residue chain is Isoflavipucine cluster transcription factor ATEG_00326 (424 aa).

The zn(2)-C6 fungal-type DNA-binding region spans 10–38 (CDRCHGQKLRCIHSGGGPCVRCAKAKATC). Positions 265–286 (ARMQTPEGTPERTSESSPSGPP) are disordered.

The protein localises to the nucleus. Transcription factor that regulates the expression of the gene cluster that mediates the biosynthesis of isoflavipucine. This is Isoflavipucine cluster transcription factor ATEG_00326 from Aspergillus terreus (strain NIH 2624 / FGSC A1156).